The primary structure comprises 248 residues: MEWHDEGIVLGTRRHGESSVILEAITAAHGRHLGLVRGGRSKRMQPVLQPGNRVDLTWRARLDEHLGLFQVEPLELNAARLLNSAVAIYGIQLLAAHLRLLPERDPHPGLFEALGVIAAHLDEPETAGVLVARFELAVLDALGFGLDLARCAVTGSREDLAYVSPKTGRAVTREAGAPWADKLLPLPTFLTAGNEALYDRAILSQAFALTGFFFARHVYEPRGLTEPEARAGFLAAVMRNLPEGESAP.

The protein belongs to the RecO family.

Functionally, involved in DNA repair and RecF pathway recombination. This Chelativorans sp. (strain BNC1) protein is DNA repair protein RecO.